Here is a 90-residue protein sequence, read N- to C-terminus: uncharacterized protein (90 aa).

A disordered region spans residues 25–90 (GEAAYNSPTN…PPIAPPPILD (66 aa)). 2 stretches are compositionally biased toward polar residues: residues 30–54 (NSPT…TESV) and 65–79 (NDQT…SNVN).

This is an uncharacterized protein from Bacillus subtilis (strain 168).